We begin with the raw amino-acid sequence, 585 residues long: L-gulonolactone oxidase 3 (585 aa).

Residues 1 to 24 (MRYSHTLQQFSILSFFVTIWTVQS) form the signal peptide. In terms of domain architecture, FAD-binding PCMH-type spans 51–233 (KTCHAANVTY…SKVKLSIEKA (183 aa)).

It belongs to the oxygen-dependent FAD-linked oxidoreductase family. Requires FAD as cofactor.

The protein localises to the vacuole. It carries out the reaction L-gulono-1,4-lactone + O2 = L-ascorbate + H2O2 + H(+). It functions in the pathway cofactor biosynthesis; L-ascorbate biosynthesis. Its function is as follows. Catalyzes the oxidation of L-gulono-1,4-lactone to ascorbic acid. L-gulono-1,4-lactone is oxidized to hydrogen peroxide and L-xylo-hexulonolactone which spontaneously isomerizes to L-ascorbate. In Arabidopsis thaliana (Mouse-ear cress), this protein is L-gulonolactone oxidase 3.